We begin with the raw amino-acid sequence, 297 residues long: Manganese efflux system protein MneP (297 aa).

The next 6 helical transmembrane spans lie at 12–32 (VALI…FFGL), 43–63 (GIHS…IGIS), 85–105 (IVGI…ILSF), 111–131 (VPQY…EILY), 155–175 (GDIV…IGNS), and 177–197 (GWSY…YLIF).

Belongs to the cation diffusion facilitator (CDF) transporter (TC 2.A.4) family.

The protein localises to the cell membrane. Its function is as follows. Primary efflux pump for manganese. May prevent manganese intoxication. This is Manganese efflux system protein MneP from Bacillus subtilis (strain 168).